A 438-amino-acid chain; its full sequence is Dol-P-Man:Man(5)GlcNAc(2)-PP-Dol alpha-1,3-mannosyltransferase (438 aa).

At S13 the chain carries Phosphoserine. Helical transmembrane passes span 41–61 (YTLLVASCLCIAEVGITFWVI), 95–115 (TGPLVYPAGFLYIFTGLFYAT), 123–143 (MAQNIFAVLYLVTLVLVFLIY), 149–169 (VPPFVFFFMCCASYRVHSIFV), 172–192 (LFNDPVAMALLFLSINLFLAQ), 203–223 (LAVSVKMNVLLFAPGLLFLLL), 231–251 (ALPKLAICAALQVVLGLPFLL), 289–309 (FHLALLAAHLSLLLLFALCRW), 332–352 (ALTPNQIVSILFTSNFIGICF), 356–376 (LHYQFYVWYFHTLPYLLWAMP), and 407–427 (AALHLCHAVVLLQLWLSPESF).

Belongs to the glycosyltransferase ALG3 family.

It localises to the endoplasmic reticulum membrane. It catalyses the reaction an alpha-D-Man-(1-&gt;2)-alpha-D-Man-(1-&gt;2)-alpha-D-Man-(1-&gt;3)-[alpha-D-Man-(1-&gt;6)]-beta-D-Man-(1-&gt;4)-beta-D-GlcNAc-(1-&gt;4)-alpha-D-GlcNAc-diphospho-di-trans,poly-cis-dolichol + a di-trans,poly-cis-dolichyl beta-D-mannosyl phosphate = an alpha-D-Man-(1-&gt;2)-alpha-D-Man-(1-&gt;2)-alpha-D-Man-(1-&gt;3)-[alpha-D-Man-(1-&gt;3)-alpha-D-Man-(1-&gt;6)]-beta-D-Man-(1-&gt;4)-beta-D-GlcNAc-(1-&gt;4)-alpha-D-GlcNAc-diphospho-di-trans,poly-cis-dolichol + a di-trans,poly-cis-dolichyl phosphate + H(+). The protein operates within protein modification; protein glycosylation. Its function is as follows. Dol-P-Man:Man(5)GlcNAc(2)-PP-Dol alpha-1,3-mannosyltransferase that operates in the biosynthetic pathway of dolichol-linked oligosaccharides, the glycan precursors employed in protein asparagine (N)-glycosylation. The assembly of dolichol-linked oligosaccharides begins on the cytosolic side of the endoplasmic reticulum membrane and finishes in its lumen. The sequential addition of sugars to dolichol pyrophosphate produces dolichol-linked oligosaccharides containing fourteen sugars, including two GlcNAcs, nine mannoses and three glucoses. Once assembled, the oligosaccharide is transferred from the lipid to nascent proteins by oligosaccharyltransferases. In the lumen of the endoplasmic reticulum, adds the first dolichyl beta-D-mannosyl phosphate derived mannose in an alpha-1,3 linkage to Man(5)GlcNAc(2)-PP-dolichol to produce Man(6)GlcNAc(2)-PP-dolichol. Man(6)GlcNAc(2)-PP-dolichol is a substrate for ALG9, the following enzyme in the biosynthetic pathway. In Mus musculus (Mouse), this protein is Dol-P-Man:Man(5)GlcNAc(2)-PP-Dol alpha-1,3-mannosyltransferase.